The chain runs to 872 residues: Leucine-rich repeat-containing protein 66 (872 aa).

Residues 4–24 (FYVRVTILVTGLCFVETVTTP) form a helical membrane-spanning segment. N-linked (GlcNAc...) asparagine glycans are attached at residues N45 and N108. LRR repeat units lie at residues 142-164 (RLQVLILQRNQLSGTPKGLWKLK), 165-186 (SLRSLDLSFNRIVHIGLSDFHG), 189-210 (QLESIYLKSNKICTIHPKAFKG), 213-234 (KLQVVDLRSNALTTLVPIVTIA), and 239-259 (HLELGLADNQWQCSESNVNFQ). The tract at residues 339–363 (LRGMWPQSPVELRDSQDEQVTDRKD) is disordered. A compositionally biased stretch (basic and acidic residues) spans 349 to 363 (ELRDSQDEQVTDRKD). Residues 371 to 391 (LAICLSVFITFVVAFCLGAFA) form a helical membrane-spanning segment. The segment covering 467 to 483 (QMLGSNGTDPGHQQSPE) has biased composition (polar residues). Disordered regions lie at residues 467–501 (QMLGSNGTDPGHQQSPEQLKDSNESRSGDSIVLPS), 560–579 (GTFPSSVESRRDDLHPSQPR), 695–761 (NYES…SQRI), and 776–872 (LISG…SKHW). An N-linked (GlcNAc...) asparagine glycan is attached at N472. Positions 484–493 (QLKDSNESRS) are enriched in basic and acidic residues. S718 carries the post-translational modification Phosphoserine. Composition is skewed to polar residues over residues 725–736 (SVENDGTSQPLP), 746–760 (SVTSAESVEDLTSQR), and 785–805 (CETNQENDSSSLDPENRSTWP). The residue at position 752 (S752) is a Phosphoserine. Over residues 831–841 (VDWHYSLRDLE) the composition is skewed to basic and acidic residues.

The protein localises to the membrane. This Mus musculus (Mouse) protein is Leucine-rich repeat-containing protein 66 (Lrrc66).